Here is a 234-residue protein sequence, read N- to C-terminus: Probable transcriptional regulatory protein PSPPH_2212 (234 aa).

This sequence belongs to the TACO1 family.

The protein resides in the cytoplasm. The chain is Probable transcriptional regulatory protein PSPPH_2212 from Pseudomonas savastanoi pv. phaseolicola (strain 1448A / Race 6) (Pseudomonas syringae pv. phaseolicola (strain 1448A / Race 6)).